The chain runs to 310 residues: Probable deoxyhypusine synthase (310 aa).

Lys284 (nucleophile) is an active-site residue.

This sequence belongs to the deoxyhypusine synthase family. It depends on NAD(+) as a cofactor.

It catalyses the reaction [eIF5A protein]-L-lysine + spermidine = [eIF5A protein]-deoxyhypusine + propane-1,3-diamine. It participates in protein modification; eIF5A hypusination. Its function is as follows. Catalyzes the NAD-dependent oxidative cleavage of spermidine and the subsequent transfer of the butylamine moiety of spermidine to the epsilon-amino group of a specific lysine residue of the eIF-5A precursor protein to form the intermediate deoxyhypusine residue. The chain is Probable deoxyhypusine synthase (dys) from Thermoplasma volcanium (strain ATCC 51530 / DSM 4299 / JCM 9571 / NBRC 15438 / GSS1).